A 327-amino-acid chain; its full sequence is Flotillin-like protein FloA (327 aa).

A run of 2 helical transmembrane segments spans residues 8–28 (VLLI…LVPI) and 29–49 (PLWI…LVGM).

The protein belongs to the flotillin-like FloA family. Homooligomerizes.

The protein resides in the cell membrane. Its subcellular location is the membrane raft. Found in functional membrane microdomains (FMM) that may be equivalent to eukaryotic membrane rafts. FMMs are highly dynamic and increase in number as cells age. Flotillins are thought to be important factors in membrane fluidity. The chain is Flotillin-like protein FloA from Exiguobacterium sibiricum (strain DSM 17290 / CCUG 55495 / CIP 109462 / JCM 13490 / 255-15).